The sequence spans 140 residues: UPF0306 protein YhbP (140 aa).

Belongs to the UPF0306 family.

This Escherichia coli O6:H1 (strain CFT073 / ATCC 700928 / UPEC) protein is UPF0306 protein YhbP.